We begin with the raw amino-acid sequence, 205 residues long: Regulator of G-protein signaling 4 (205 aa).

Residues Cys2, Cys12, and Cys95 are each lipidated (S-palmitoyl cysteine). The 117-residue stretch at 62–178 (SLENLINHEC…LKSRFYLDLT (117 aa)) folds into the RGS domain.

Post-translationally, either Cys-2 or Cys-12 or both are palmitoylated. Phosphorylated by cyclic GMP-dependent protein kinase.

Its function is as follows. Inhibits signal transduction by increasing the GTPase activity of G protein alpha subunits thereby driving them into their inactive GDP-bound form. Activity on G(z)-alpha is inhibited by phosphorylation of the G-protein. Activity on G(z)-alpha and G(i)-alpha-1 is inhibited by palmitoylation of the G-protein. This Rattus norvegicus (Rat) protein is Regulator of G-protein signaling 4 (Rgs4).